A 257-amino-acid chain; its full sequence is Acetylglutamate kinase (257 aa).

Substrate contacts are provided by residues 41–42, R63, and N158; that span reads GG.

This sequence belongs to the acetylglutamate kinase family. ArgB subfamily.

The protein resides in the cytoplasm. It catalyses the reaction N-acetyl-L-glutamate + ATP = N-acetyl-L-glutamyl 5-phosphate + ADP. The protein operates within amino-acid biosynthesis; L-arginine biosynthesis; N(2)-acetyl-L-ornithine from L-glutamate: step 2/4. In terms of biological role, catalyzes the ATP-dependent phosphorylation of N-acetyl-L-glutamate. The polypeptide is Acetylglutamate kinase (Phocaeicola vulgatus (strain ATCC 8482 / DSM 1447 / JCM 5826 / CCUG 4940 / NBRC 14291 / NCTC 11154) (Bacteroides vulgatus)).